We begin with the raw amino-acid sequence, 218 residues long: MNCRSEILEVSVEGRQVEEAMLAVLHTILLHRSTGKFHYKKEGTYSIGTVGTQDIDCDFIEFTYVRVSSEELDRALHKAVSEFKDALRNSGSDGIGQVSLEFYQKKKSRWPFSDECIPWEVWTIKVNVVSLANEQERQICREKVGEKLGEKIINIVEVMNRHEYLPKMPTQSEVDNVFDTSLKDVQPYLYKISYQITDSLGTSVTTTMRRLIKDTLAL.

This sequence belongs to the ATG101 family.

It is found in the cytoplasm. It localises to the preautophagosomal structure. Functionally, autophagy factor required for autophagosome formation. This chain is Autophagy-related protein 101 (atg101), found in Xenopus laevis (African clawed frog).